The sequence spans 187 residues: Protein TIFY 3B (187 aa).

The segment covering 1–10 (MTKVKDEPRA) has biased composition (basic and acidic residues). The tract at residues 1-50 (MTKVKDEPRASVEGGCGVADGDGGAAEIGGTGSVEKSINEVRSTEIQTAE) is disordered. Residues 14–32 (GGCGVADGDGGAAEIGGTG) are compositionally biased toward gly residues. In terms of domain architecture, Tify spans 51–86 (PTVPPNQLTIFFGGSVTVFDGLPSEKVQEILRIAAK). Positions 139 to 163 (PIARRHSLQRFLEKRRDRLVNKNPY) match the Jas motif. Positions 141–148 (ARRHSLQR) match the Nuclear localization signal motif. A disordered region spans residues 152 to 187 (KRRDRLVNKNPYPTSDFKKTDVPTGNVSIKEEFPTA).

This sequence belongs to the TIFY/JAZ family. Interacts with MYC2, AFPH2/NINJA, TIFY10A/JAZ1, TIFY10B/JAZ2, TIFY11A/JAZ5, TIFY11B/JAZ6, TIFY5A/JAZ8 and TIFY9/JAZ10. As to quaternary structure, (Microbial infection) Interacts with the pathogenic Pseudomonas syringae HopZ1a protein. In terms of processing, (Microbial infection) Acetylated by Pseudomonas syringae HopZ1a. Post-translationally, ubiquitinated. Targeted for degradation by the SCF(COI1) E3 ubiquitin ligase-proteasome pathway during jasmonate signaling.

The protein resides in the nucleus. Functionally, repressor of jasmonate responses. The sequence is that of Protein TIFY 3B from Arabidopsis thaliana (Mouse-ear cress).